We begin with the raw amino-acid sequence, 1087 residues long: Band 4.1-like protein 3 (1087 aa).

At Met-1 the chain carries N-acetylmethionine. Residues 1–43 (MTTESGSDSESKPDQEAEPQEAAGAQGRAGAPVPEPPKEEQQQ) are disordered. An N-acetylthreonine; in Band 4.1-like protein 3, N-terminally processed modification is found at Thr-2. The segment covering 20–32 (QEAAGAQGRAGAP) has biased composition (low complexity). Ser-88 is modified (phosphoserine). The FERM domain maps to 110–391 (MQCKVILLDG…EHHTFFRLLL (282 aa)). The interval 394 to 513 (APPKKFLTLG…PGLGTDSCPL (120 aa)) is hydrophilic. A phosphoserine mark is found at Ser-420, Ser-443, and Ser-460. A compositionally biased stretch (polar residues) spans 459 to 469 (ISQTNLITTVT). 4 disordered regions span residues 459–529 (ISQT…TELR), 541–563 (GYEP…GPGR), 675–715 (SASL…EDAE), and 937–965 (SETL…SPGG). Thr-469 and Thr-492 each carry phosphothreonine. The tract at residues 514 to 860 (SPPSTHCAPT…VVQETVLVEE (347 aa)) is spectrin--actin-binding. Positions 516-526 (PSTHCAPTSPT) are enriched in polar residues. The span at 681–691 (DPSDSSEEETD) shows a compositional bias: acidic residues. The span at 698 to 707 (AADGETTATE) shows a compositional bias: low complexity. Phosphothreonine is present on Thr-706. Residues Ser-708, Ser-960, and Ser-962 each carry the phosphoserine modification. Residues 861-1083 (RRVVHASGDA…VHKETEITPE (223 aa)) are C-terminal (CTD). The span at 947–960 (ESSTVKTETISFGS) shows a compositional bias: polar residues. Phosphothreonine is present on Thr-1081.

Interacts (via FERM domain) with CADM1. Interacts (via FERM domain) with PRMT3; the interaction is direct and inhibits the protein-arginine N-methyltransferase activity of PRMT3. Interacts with PRMT5. Interacts with PRMT6. Expressed at high levels in brain, with lower levels in kidney, intestine, and testis. Detected in lung.

The protein localises to the cytoplasm. It localises to the cytoskeleton. Its subcellular location is the cell junction. The protein resides in the cell membrane. In terms of biological role, tumor suppressor that inhibits cell proliferation and promotes apoptosis. Modulates the activity of protein arginine N-methyltransferases, including PRMT3 and PRMT5. The protein is Band 4.1-like protein 3 of Homo sapiens (Human).